The sequence spans 282 residues: Pantothenate synthetase (282 aa).

ATP is bound at residue 30-37 (MGYLHEGH). Histidine 37 functions as the Proton donor in the catalytic mechanism. (R)-pantoate is bound at residue glutamine 61. Glutamine 61 contributes to the beta-alanine binding site. 147-150 (GMKD) provides a ligand contact to ATP. Residue glutamine 153 coordinates (R)-pantoate. ATP is bound by residues valine 176 and 184 to 187 (KSSR).

The protein belongs to the pantothenate synthetase family. In terms of assembly, homodimer.

It localises to the cytoplasm. It catalyses the reaction (R)-pantoate + beta-alanine + ATP = (R)-pantothenate + AMP + diphosphate + H(+). Its pathway is cofactor biosynthesis; (R)-pantothenate biosynthesis; (R)-pantothenate from (R)-pantoate and beta-alanine: step 1/1. Functionally, catalyzes the condensation of pantoate with beta-alanine in an ATP-dependent reaction via a pantoyl-adenylate intermediate. This chain is Pantothenate synthetase, found in Bacillus anthracis (strain A0248).